The chain runs to 1048 residues: PH and SEC7 domain-containing protein 3 (1048 aa).

Over residues 36 to 45 (SEGKAPDTSD) the composition is skewed to basic and acidic residues. Residues 36-57 (SEGKAPDTSDHGGSTLLPPNVT) are disordered. Position 76 is a phosphoserine (S76). 4 disordered regions span residues 104 to 126 (LDSVTEGPKDVREAPSQSHLKEQ), 310 to 342 (GGDKRETQHPIDFETSLQRTASPDSKESSKVPR), 364 to 383 (SWKAPSERPGTSSGTFSPVR), and 395 to 434 (QENKQHLEKTPKPERDRERISEQEEHVKGEDEDILGPGYT). Residues 311–321 (GDKRETQHPID) show a composition bias toward basic and acidic residues. Positions 397-423 (NKQHLEKTPKPERDRERISEQEEHVKG) are enriched in basic and acidic residues. The SEC7 domain occupies 534-734 (TKGTPEIAFW…KALYNSIKNE (201 aa)). The segment covering 741–758 (DDEEKKKSPSESTEEKAN) has biased composition (basic and acidic residues). A disordered region spans residues 741–769 (DDEEKKKSPSESTEEKANGTHPKTISRIG). Position 770 is a phosphoserine (S770). The region spanning 785-898 (AVYKSGFLAR…WINKINCVAA (114 aa)) is the PH domain. Residues 922 to 952 (ATTTKLSQEEQLKSHESKLKQITTELAEHRS) are a coiled coil. The tract at residues 999–1048 (DESEAAGLKKSHSSPSLNPDTSPITAKVKRNVSERKDHRPETPSIKQKVT) is disordered. Phosphoserine is present on residues S1009, S1011, S1012, S1014, and S1020. Residues 1011-1022 (SSPSLNPDTSPI) show a composition bias toward polar residues. The span at 1029–1039 (NVSERKDHRPE) shows a compositional bias: basic and acidic residues.

Isoform 2 is expressed in epididymis (at protein level).

The protein localises to the cell membrane. It localises to the cell projection. It is found in the ruffle membrane. Its subcellular location is the postsynaptic density. Functionally, guanine nucleotide exchange factor for ARF6. This Homo sapiens (Human) protein is PH and SEC7 domain-containing protein 3 (PSD3).